The primary structure comprises 378 residues: Neutral protease 2 homolog ARB_04336 (378 aa).

Residues 1-19 form the signal peptide; it reads MKFFTALAAVGALLAPAVA. The propeptide occupies 20–186; it reads LPTPASEASH…DYFSKGLDKR (167 aa). 2 disulfide bridges follow: cysteine 192–cysteine 262 and cysteine 269–cysteine 287. Histidine 311 is a Zn(2+) binding site. Glutamate 312 is a catalytic residue. Positions 315 and 326 each coordinate Zn(2+).

Belongs to the peptidase M35 family. The cofactor is Zn(2+).

The protein localises to the secreted. It carries out the reaction Preferential cleavage of bonds with hydrophobic residues in P1'. Also 3-Asn-|-Gln-4 and 8-Gly-|-Ser-9 bonds in insulin B chain.. In terms of biological role, secreted metalloproteinase that allows assimilation of proteinaceous substrates. Shows high activities on basic nuclear substrates such as histone and protamine. May be involved in virulence. The protein is Neutral protease 2 homolog ARB_04336 of Arthroderma benhamiae (strain ATCC MYA-4681 / CBS 112371) (Trichophyton mentagrophytes).